The sequence spans 60 residues: Insect toxin mu-NPTX-Nc1a (60 aa).

Residues 1-19 (MIYQVVLLLLVSPAPVSAA) form the signal peptide.

Contains 4 disulfide bonds. In terms of tissue distribution, expressed by the venom gland.

It is found in the secreted. Its function is as follows. Insect-specific toxin. Blocks voltage-gated potassium and sodium channels. The polypeptide is Insect toxin mu-NPTX-Nc1a (Trichonephila clavata (Joro spider)).